Reading from the N-terminus, the 558-residue chain is Phosphatidylserine lipase ABHD16A (558 aa).

2 helical membrane-spanning segments follow: residues 60 to 80 and 93 to 113; these read ILAL…FAFF and VVPF…VACL. The Cytoplasmic portion of the chain corresponds to 114–558; it reads RGIGRWTNPQ…AQNFQMPWHL (445 aa). The 127-residue stretch at 281–407 folds into the AB hydrolase-1 domain; that stretch reads LVICCEGNAG…LVTRTVRQHL (127 aa). Residues Ser355, Asp430, and His507 each act as charge relay system in the active site.

Belongs to the AB hydrolase superfamily. ABHD16 family.

The protein resides in the membrane. It carries out the reaction 1-heptadecanoyl-2-(5Z,8Z,11Z,14Z-eicosatetraenoyl)-sn-glycero-3-phosphoserine + H2O = 1-heptadecanoyl-sn-glycero-3-phosphoserine + (5Z,8Z,11Z,14Z)-eicosatetraenoate + H(+). The enzyme catalyses 1-hexadecanoyl-2-(9Z-octadecenoyl)-sn-glycero-3-phospho-L-serine + H2O = 1-hexadecanoyl-sn-glycero-3-phospho-L-serine + (9Z)-octadecenoate + H(+). The catalysed reaction is 1-octadecanoyl-2-(9Z,12Z-octadecadienoyl)-sn-glycero-3-phosphoserine + H2O = 1-octadecanoyl-sn-glycero-3-phosphoserine + (9Z,12Z)-octadecadienoate + H(+). It catalyses the reaction 1-heptadecanoyl-2-(5Z,8Z,11Z,14Z-eicosatetraenoyl)-sn-glycero-3-phosphocholine + H2O = 1-heptadecanoyl-sn-glycero-3-phosphocholine + (5Z,8Z,11Z,14Z)-eicosatetraenoate + H(+). It carries out the reaction 1-hexadecanoyl-2-(9Z-octadecenoyl)-sn-glycero-3-phosphoglycerol + H2O = 1-hexadecanoyl-sn-glycero-3-phosphoglycerol + (9Z)-octadecenoate + H(+). The enzyme catalyses 1-hexadecanoyl-2-(9Z-octadecenoyl)-sn-glycero-3-phospho-(1D-myo-inositol) + H2O = 1-hexadecanoyl-sn-glycero-3-phospho-(1D-myo-inositol) + (9Z)-octadecenoate + H(+). The catalysed reaction is 1-heptadecanoyl-2-(5Z,8Z,11Z,14Z-eicosatetraenoyl)-sn-glycero-3-phosphoethanolamine + H2O = 1-heptadecanoyl-sn-glycero-3-phosphoethanolamine + (5Z,8Z,11Z,14Z)-eicosatetraenoate + H(+). It catalyses the reaction 1-hexadecanoyl-2-(9Z-octadecenoyl)-sn-glycero-3-phospho-(1'-sn-glycerol) + H2O = 1-hexadecanoyl-sn-glycero-3-phospho-(1'-sn-glycerol) + (9Z)-octadecenoate + H(+). It carries out the reaction Hydrolyzes glycerol monoesters of long-chain fatty acids.. The enzyme catalyses 1-tetradecanoylglycerol + H2O = tetradecanoate + glycerol + H(+). The catalysed reaction is 2-hexadecanoylglycerol + H2O = glycerol + hexadecanoate + H(+). It catalyses the reaction 1-(9Z-octadecenoyl)-glycerol + H2O = glycerol + (9Z)-octadecenoate + H(+). It carries out the reaction 2-(9Z-octadecenoyl)-glycerol + H2O = glycerol + (9Z)-octadecenoate + H(+). The enzyme catalyses 2-(9Z,12Z-octadecadienoyl)-glycerol + H2O = (9Z,12Z)-octadecadienoate + glycerol + H(+). The catalysed reaction is 1-(5Z,8Z,11Z,14Z-eicosatetraenoyl)-glycerol + H2O = glycerol + (5Z,8Z,11Z,14Z)-eicosatetraenoate + H(+). It catalyses the reaction 2-(5Z,8Z,11Z,14Z-eicosatetraenoyl)-glycerol + H2O = glycerol + (5Z,8Z,11Z,14Z)-eicosatetraenoate + H(+). It carries out the reaction prostaglandin D2-1-glycerol ester + H2O = prostaglandin D2 + glycerol + H(+). The enzyme catalyses 2-glyceryl-15-deoxy-Delta(12,14)-prostaglandin J2 + H2O = 15-deoxy-Delta(12,14)-prostaglandin J2 + glycerol + H(+). The catalysed reaction is 1-(9Z,12Z-octadecadienoyl)-glycerol + H2O = (9Z,12Z)-octadecadienoate + glycerol + H(+). Functionally, phosphatidylserine (PS) lipase that mediates the hydrolysis of phosphatidylserine to generate lysophosphatidylserine (LPS). LPS constitutes a class of signaling lipids that regulates immunological and neurological processes. Has no activity towards diacylglycerol, triacylglycerol or lysophosphatidylserine lipase. Also has monoacylglycerol lipase activity, with preference for 1-(9Z,12Z-octadecadienoyl)-glycerol (1-LG) and 2-glyceryl-15-deoxy-Delta(12,14)-prostaglandin J2 (15d-PGJ(2)-G). This chain is Phosphatidylserine lipase ABHD16A, found in Macaca fascicularis (Crab-eating macaque).